Reading from the N-terminus, the 634-residue chain is DNA-directed RNA polymerase subunit gamma (634 aa).

Zn(2+) contacts are provided by C74, C76, C89, and C92. Mg(2+)-binding residues include D471, D473, and D475.

The protein belongs to the RNA polymerase beta' chain family. RpoC1 subfamily. In cyanobacteria the RNAP catalytic core is composed of 2 alpha, 1 beta, 1 beta', 1 gamma and 1 omega subunit. When a sigma factor is associated with the core the holoenzyme is formed, which can initiate transcription. The cofactor is Mg(2+). Zn(2+) serves as cofactor.

The catalysed reaction is RNA(n) + a ribonucleoside 5'-triphosphate = RNA(n+1) + diphosphate. In terms of biological role, DNA-dependent RNA polymerase catalyzes the transcription of DNA into RNA using the four ribonucleoside triphosphates as substrates. In Synechococcus sp. (strain CC9605), this protein is DNA-directed RNA polymerase subunit gamma.